Consider the following 434-residue polypeptide: Nicotinate phosphoribosyltransferase (434 aa).

His-242 bears the Phosphohistidine; by autocatalysis mark.

Belongs to the NAPRTase family. Post-translationally, transiently phosphorylated on a His residue during the reaction cycle. Phosphorylation strongly increases the affinity for substrates and increases the rate of nicotinate D-ribonucleotide production. Dephosphorylation regenerates the low-affinity form of the enzyme, leading to product release.

It catalyses the reaction nicotinate + 5-phospho-alpha-D-ribose 1-diphosphate + ATP + H2O = nicotinate beta-D-ribonucleotide + ADP + phosphate + diphosphate. The protein operates within cofactor biosynthesis; NAD(+) biosynthesis; nicotinate D-ribonucleotide from nicotinate: step 1/1. In terms of biological role, catalyzes the synthesis of beta-nicotinate D-ribonucleotide from nicotinate and 5-phospho-D-ribose 1-phosphate at the expense of ATP. This is Nicotinate phosphoribosyltransferase from Bartonella tribocorum (strain CIP 105476 / IBS 506).